Consider the following 896-residue polypeptide: Bifunctional glutamine synthetase adenylyltransferase/adenylyl-removing enzyme (896 aa).

Residues 1 to 411 form an adenylyl removase region; the sequence is MSDNRLDTAR…LFNEILSEPE (411 aa). Positions 417-896 are adenylyl transferase; that stretch reads NSEWQWAWQE…EVFGEEAATA (480 aa).

Belongs to the GlnE family. Mg(2+) is required as a cofactor.

It carries out the reaction [glutamine synthetase]-O(4)-(5'-adenylyl)-L-tyrosine + phosphate = [glutamine synthetase]-L-tyrosine + ADP. It catalyses the reaction [glutamine synthetase]-L-tyrosine + ATP = [glutamine synthetase]-O(4)-(5'-adenylyl)-L-tyrosine + diphosphate. Involved in the regulation of glutamine synthetase GlnA, a key enzyme in the process to assimilate ammonia. When cellular nitrogen levels are high, the C-terminal adenylyl transferase (AT) inactivates GlnA by covalent transfer of an adenylyl group from ATP to specific tyrosine residue of GlnA, thus reducing its activity. Conversely, when nitrogen levels are low, the N-terminal adenylyl removase (AR) activates GlnA by removing the adenylyl group by phosphorolysis, increasing its activity. The regulatory region of GlnE binds the signal transduction protein PII (GlnB) which indicates the nitrogen status of the cell. The polypeptide is Bifunctional glutamine synthetase adenylyltransferase/adenylyl-removing enzyme (Neisseria meningitidis serogroup A / serotype 4A (strain DSM 15465 / Z2491)).